The primary structure comprises 1187 residues: MPRRAGSGQLPLPRGWEEARDYDGKVFYIDHNTRRTSWIDPRDRLTKPLSFADCVGDELPWGWEAGFDPQIGAYYIDHINKTTQIEDPRKQWRGEQEKMLKDYLSVAQDALRTQKELYHVKEQRLALALDEYVRLNDAYKEKSSSHTSLFSGSSSSTKYDPDILKAEISTTQLRVKKLKRELSHMKQELLYKQQGFETLQQIDEKMSGGQSGYELNEAKAILTELKSIRKAISSGEKEKQDLMQSLAKLQERFHLDQNMGSSEPDLRSSPVNSHLSLSRQTLDAGSQTSISGDIGVRSRSNLAEKVRLSLQYEEAKRSMANLKIELSKLDGEAWPGALDIEKEKLMLINEKEELLKELQFITPQKRSQEELERLEAERQHLEEELMAARGSPSRALTERLKLEEKRKELLQKLEETTKLTTSLYSQLQSLSSSTLSMSSGSSLGSLASSRGSLNTSSRGSLNSLSSSELYYSSQGDQMDTDYQYKLDFLLQEKGGYIPSGPITTIHENEVVKSPSQPGQSGLCGVGVTASSHTTPLTEASKSVASLSSRSSLSSLSPPGSPLVLDSVFPGSSHDTSPHQFPTDFEDCELSRRFADVGLGENQALLDSDSGGASQPLLEDKGLSDCPGELLCEGATDVEKSLPKRRGLHLRGDKTTRVSAAASDESVAGDSGVYEASMKQPGEMEDVPYSEEDVTIVETAQVQIGLRYDTKSSSFMVIIAQLRNLHAFSIPHSSKVYFRVALLPSSADVSCLFRTKVHPPTESVLYNDVFRVAVSQAALQQKTLRVDLCSASKHRREECLAGTQISLADLPFSNEIFMLWYNLLPSKQMPCKKNEDGNEEPGARSQQPMLDPIDLDAVSALLARTSAELLAVEQELAQEEEEEELRPERRGPGRDCLTMLREASDEPAALRESGVPLAEGSRCTEDPKPCPRGPETSQCRKEPAEDPGQLPSGLPTLVDKETNTDEVVDSNMAVRPKDRSSLSSRQHPFVRNSVIVRSQTFSPGERSQYICRLNRSDSDSSTLAKKSLFVRNSTERRSLRVKRAVCQPTLRRTAQECPVRTSLDLELDLQASLTRQSRLNDELQALRGLRQKLEELKAQGETDLPPGVLEDERFQKLLKQAEKQAEQTKEEQKQDLNAERLMRQVSKDVCRLREQSQKEPRQVQSFREKIAYFTRAKISIPSLPADDV.

2 consecutive WW domains span residues 10 to 43 (LPLP…DPRD) and 57 to 90 (DELP…DPRK). Coiled coils occupy residues 121–194 (KEQR…YKQQ) and 224–256 (ELKS…FHLD). Phosphoserine is present on S286. Residues 302 to 423 (LAEKVRLSLQ…EETTKLTTSL (122 aa)) adopt a coiled-coil conformation. The interval 438–464 (SSGSSLGSLASSRGSLNTSSRGSLNSL) is disordered. The region spanning 697–820 (ETAQVQIGLR…FSNEIFMLWY (124 aa)) is the C2 domain. Disordered regions lie at residues 830 to 849 (CKKN…QPML) and 874 to 963 (ELAQ…ETNT). The stretch at 859–885 (ALLARTSAELLAVEQELAQEEEEEELR) forms a coiled coil. The segment covering 875–884 (LAQEEEEEEL) has biased composition (acidic residues). T999 bears the Phosphothreonine mark. S1017 is modified (phosphoserine). Residues 1026-1045 (SLFVRNSTERRSLRVKRAVC) form an interaction with PRKCZ region. Residues 1063 to 1143 (DLELDLQASL…DLNAERLMRQ (81 aa)) are a coiled coil.

It belongs to the WWC family. As to quaternary structure, forms homodimers and heterodimers with WWC1 and WWC3. Interacts with DLC1 and PRKCZ. Interacts (via WW domains) with LATS1 and LATS2.

The protein resides in the cytoplasm. Its subcellular location is the cytosol. Regulator of the Hippo signaling pathway, also known as the Salvador-Warts-Hippo (SWH) pathway. Enhances phosphorylation of LATS1 and YAP1 and negatively regulates cell proliferation and organ growth due to a suppression of the transcriptional activity of YAP1, the major effector of the Hippo pathway. This Mus musculus (Mouse) protein is Protein WWC2 (Wwc2).